A 385-amino-acid chain; its full sequence is WD repeat-containing protein 74 (385 aa).

WD repeat units lie at residues 40 to 80 (RREE…FQGQ), 83 to 122 (CPGGEGMFRGLAQADGTLITCVDSGILRVWHDKDKDTSSD), 128 to 168 (RVGP…EPVF), 179 to 220 (DLRV…RRPV), 224 to 266 (TYGE…GCLK), and 267 to 306 (GLAGSVRGLQCHPSKPLLASCGLDRVLRIHRIQNPRGLEH). Ser-214 bears the Phosphoserine mark. Lys-311 is subject to N6-methyllysine. The segment at 320-385 (SGRDNWEDEP…KKKRPGSTSP (66 aa)) is required for nucleolar and nuclear location. 2 disordered regions span residues 323-345 (DNWEDEPQEPQEPNKVPLEDTET) and 360-385 (LSGLEQPQGALQTRRRKKKRPGSTSP). Position 361 is a phosphoserine (Ser-361). The segment covering 372-385 (TRRRKKKRPGSTSP) has biased composition (basic residues).

In terms of assembly, isoform 1 interacts (through WDR repeats) with NVL; the interaction is independent of RNA or pre-60S ribosome particles. Isoform 2 does not interact with NVL. Interacts with MTREX; the interaction dissociation in a late stage of rRNA synthesis is required for appropriate maturation of pre-60S particles and depends on the ATPase activity of NVL.

It is found in the nucleus. It localises to the nucleolus. Functionally, regulatory protein of the MTREX-exosome complex involved in the synthesis of the 60S ribosomal subunit. Participates in an early cleavage of the pre-rRNA processing pathway in cooperation with NVL. Required for blastocyst formation, is necessary for RNA transcription, processing and/or stability during preimplantation development. The polypeptide is WD repeat-containing protein 74 (WDR74) (Homo sapiens (Human)).